Reading from the N-terminus, the 1006-residue chain is Pleckstrin homology domain-containing family G member 5 (1006 aa).

Disordered regions lie at residues methionine 1 to aspartate 71, proline 148 to alanine 198, and glutamate 212 to tryptophan 242. A compositionally biased stretch (acidic residues) spans aspartate 36–serine 45. Basic and acidic residues-rich tracts occupy residues proline 151 to lysine 165 and glutamate 183 to leucine 194. The segment covering serine 224–tryptophan 242 has biased composition (low complexity). Residues histidine 336 to cysteine 528 enclose the DH domain. The 101-residue stretch at glutamine 584 to asparagine 684 folds into the PH domain. 3 disordered regions span residues arginine 690–glycine 754, aspartate 768–glycine 820, and alanine 837–proline 863. Residues leucine 704 to aspartate 726 are compositionally biased toward acidic residues. 2 stretches are compositionally biased toward polar residues: residues serine 727–glycine 754 and threonine 769–aspartate 785. At threonine 729 the chain carries Phosphothreonine. Phosphoserine is present on serine 734. Over residues glutamate 786–leucine 803 the composition is skewed to low complexity. Residues proline 847–proline 856 show a composition bias toward pro residues. Residues serine 851, serine 876, and serine 881 each carry the phosphoserine modification. The interval alanine 950–glutamine 979 is disordered.

In terms of assembly, interacts with GIPC1/synectin and RHOA. In terms of tissue distribution, predominantly expressed in the peripheral nervous system and brain. Highest expression is observed in heart, lung, kidney, testis and moderate expression is present in spleen, pancreas, skeletal muscle, ovary and liver. Weakly expressed in glioblastoma (GBM) cell lines.

It localises to the cytoplasm. The protein resides in the perinuclear region. It is found in the cell membrane. The protein localises to the cell junction. Its subcellular location is the cell projection. It localises to the lamellipodium. Its function is as follows. Functions as a guanine exchange factor (GEF) for RAB26 and thus regulates autophagy of synaptic vesicles in axon terminal of motoneurons. Involved in the control of neuronal cell differentiation. Plays a role in angiogenesis through regulation of endothelial cells chemotaxis. Also affects the migration, adhesion, and matrix/bone degradation in macrophages and osteoclasts. The polypeptide is Pleckstrin homology domain-containing family G member 5 (PLEKHG5) (Homo sapiens (Human)).